The chain runs to 119 residues: MAKVGKLTKLKSAMKKWPSFAKNHHHSTSSAAVSDELSEDNNLHVVYVGQTRRPYMLRPDIISHPLFQELVDRSSSRSIEQDREIVVACEVVLFEHLLWMLKSGQEGGSVEELAEFYTY.

It belongs to the ARG7 family.

May be involved in the regulation of ethylene receptor signaling. Promotes cell expansion and plant growth. In Arabidopsis thaliana (Mouse-ear cress), this protein is Auxin-responsive protein SAUR78.